Reading from the N-terminus, the 333-residue chain is Lipoyl synthase (333 aa).

Residues 1–15 (MSTLVESPVPSNDSQ) show a composition bias toward polar residues. Residues 1–34 (MSTLVESPVPSNDSQAAAPAAYDPTQKQKSQAKT) are disordered. [4Fe-4S] cluster contacts are provided by C80, C85, C91, C106, C110, C113, and S320. Residues 91–309 (CFGKGTATFM…EREAYAMGFT (219 aa)) enclose the Radical SAM core domain.

It belongs to the radical SAM superfamily. Lipoyl synthase family. [4Fe-4S] cluster serves as cofactor.

The protein resides in the cytoplasm. The enzyme catalyses [[Fe-S] cluster scaffold protein carrying a second [4Fe-4S](2+) cluster] + N(6)-octanoyl-L-lysyl-[protein] + 2 oxidized [2Fe-2S]-[ferredoxin] + 2 S-adenosyl-L-methionine + 4 H(+) = [[Fe-S] cluster scaffold protein] + N(6)-[(R)-dihydrolipoyl]-L-lysyl-[protein] + 4 Fe(3+) + 2 hydrogen sulfide + 2 5'-deoxyadenosine + 2 L-methionine + 2 reduced [2Fe-2S]-[ferredoxin]. The protein operates within protein modification; protein lipoylation via endogenous pathway; protein N(6)-(lipoyl)lysine from octanoyl-[acyl-carrier-protein]: step 2/2. Catalyzes the radical-mediated insertion of two sulfur atoms into the C-6 and C-8 positions of the octanoyl moiety bound to the lipoyl domains of lipoate-dependent enzymes, thereby converting the octanoylated domains into lipoylated derivatives. The sequence is that of Lipoyl synthase from Bordetella parapertussis (strain 12822 / ATCC BAA-587 / NCTC 13253).